The primary structure comprises 136 residues: Large-conductance mechanosensitive channel (136 aa).

Helical transmembrane passes span 9 to 29 (AFAS…GAAF) and 79 to 99 (IQTV…LKAI).

The protein belongs to the MscL family. Homopentamer.

It localises to the cell inner membrane. Functionally, channel that opens in response to stretch forces in the membrane lipid bilayer. May participate in the regulation of osmotic pressure changes within the cell. In Shewanella sp. (strain W3-18-1), this protein is Large-conductance mechanosensitive channel.